The primary structure comprises 343 residues: Ubiquitin thioesterase OTU1 (343 aa).

Residues 45-123 are UBX-like; it reads RCKAKGGTHL…IVEEDQTRPK (79 aa). The region spanning 144 to 269 is the OTU domain; it reads LTRTAVPADN…GIHYDPLQRN (126 aa). The tract at residues 149–155 is cys-loop; that stretch reads VPADNSC. Residue Asp152 is part of the active site. The Nucleophile role is filled by Cys155. The segment at 208–218 is variable-loop; it reads IRRDDTWGGAI. A his-loop region spans residues 258 to 262; that stretch reads YDGIH. Ile261 serves as a coordination point for substrate. The active site involves His262. The tract at residues 286 to 291 is S2 site; the sequence is DIVLVQ. The segment at 313-337 adopts a C2H2-type zinc-finger fold; that stretch reads LRCMICQKGLTGQAEARDHARETGH. His337 is a catalytic residue.

Interacts with VCP; the interaction is direct. Interacts with FAF2/UBXD8. Interacts with DERL1; however interaction is dependent on the UBAX-like region, suggesting that it may be indirect. Interacts with PLAA, UBXN6 and VCP; may form a complex involved in macroautophagy.

Its subcellular location is the cytoplasm. The catalysed reaction is Thiol-dependent hydrolysis of ester, thioester, amide, peptide and isopeptide bonds formed by the C-terminal Gly of ubiquitin (a 76-residue protein attached to proteins as an intracellular targeting signal).. Hydrolase that can remove conjugated ubiquitin from proteins and participates in endoplasmic reticulum-associated degradation (ERAD) for misfolded lumenal proteins. May act by triming the ubiquitin chain on the associated substrate to facilitate their threading through the VCP/p97 pore. Ubiquitin moieties on substrates may present a steric impediment to the threading process when the substrate is transferred to the VCP pore and threaded through VCP's axial channel. Mediates deubiquitination of 'Lys-27'-, 'Lys-29'- and 'Lys-33'-linked polyubiquitin chains. Also able to hydrolyze 'Lys-11'-linked ubiquitin chains. Cleaves both polyubiquitin and di-ubiquitin. May play a role in macroautophagy, regulating for instance the clearance of damaged lysosomes. May recruit PLAA, UBXN6 and VCP to damaged lysosome membranes decorated with K48-linked ubiquitin chains and remove these chains allowing autophagosome formation. In Mus musculus (Mouse), this protein is Ubiquitin thioesterase OTU1 (Yod1).